We begin with the raw amino-acid sequence, 638 residues long: 1-deoxy-D-xylulose-5-phosphate synthase (638 aa).

Residues His75 and 116-118 contribute to the thiamine diphosphate site; that span reads AHS. Asp147 contacts Mg(2+). Thiamine diphosphate-binding positions include 148 to 149, Asn177, Tyr288, and Glu370; that span reads GA. Asn177 is a binding site for Mg(2+).

It belongs to the transketolase family. DXPS subfamily. As to quaternary structure, homodimer. The cofactor is Mg(2+). Thiamine diphosphate serves as cofactor.

The catalysed reaction is D-glyceraldehyde 3-phosphate + pyruvate + H(+) = 1-deoxy-D-xylulose 5-phosphate + CO2. Its pathway is metabolic intermediate biosynthesis; 1-deoxy-D-xylulose 5-phosphate biosynthesis; 1-deoxy-D-xylulose 5-phosphate from D-glyceraldehyde 3-phosphate and pyruvate: step 1/1. Functionally, catalyzes the acyloin condensation reaction between C atoms 2 and 3 of pyruvate and glyceraldehyde 3-phosphate to yield 1-deoxy-D-xylulose-5-phosphate (DXP). The polypeptide is 1-deoxy-D-xylulose-5-phosphate synthase (Cupriavidus taiwanensis (strain DSM 17343 / BCRC 17206 / CCUG 44338 / CIP 107171 / LMG 19424 / R1) (Ralstonia taiwanensis (strain LMG 19424))).